The chain runs to 199 residues: Dephospho-CoA kinase (199 aa).

The region spanning 2 to 199 (KIAVTGGYSS…FVADRIEKKK (198 aa)) is the DPCK domain. 10-15 (SSGKSS) is a binding site for ATP.

The protein belongs to the CoaE family.

It is found in the cytoplasm. The enzyme catalyses 3'-dephospho-CoA + ATP = ADP + CoA + H(+). Its pathway is cofactor biosynthesis; coenzyme A biosynthesis; CoA from (R)-pantothenate: step 5/5. Functionally, catalyzes the phosphorylation of the 3'-hydroxyl group of dephosphocoenzyme A to form coenzyme A. The polypeptide is Dephospho-CoA kinase (Desulfotalea psychrophila (strain LSv54 / DSM 12343)).